Here is a 320-residue protein sequence, read N- to C-terminus: Malate dehydrogenase (320 aa).

NAD(+) contacts are provided by residues 10-15 (GAGQIG) and D34. Residues R83 and R89 each coordinate substrate. NAD(+) contacts are provided by residues N96 and 119-121 (ITN). Residues N121 and R152 each coordinate substrate. The active-site Proton acceptor is H176.

It belongs to the LDH/MDH superfamily. MDH type 3 family.

It carries out the reaction (S)-malate + NAD(+) = oxaloacetate + NADH + H(+). Functionally, catalyzes the reversible oxidation of malate to oxaloacetate. The polypeptide is Malate dehydrogenase (Cereibacter sphaeroides (strain ATCC 17029 / ATH 2.4.9) (Rhodobacter sphaeroides)).